Reading from the N-terminus, the 458-residue chain is NADH-quinone oxidoreductase subunit N (458 aa).

13 helical membrane passes run 3-23 (QYLF…LLFL), 29-49 (FGLI…TCTS), 64-84 (QNVK…AIAV), 92-112 (FSVL…SSTL), 147-167 (TLLG…IFVV), 188-208 (ILLF…HAWI), 222-242 (FFAV…ISNL), 265-285 (NILF…AFGQ), 291-311 (FIGF…SNSA), 320-340 (IAYA…VLML), 358-378 (VALA…FIGF), 394-414 (IPTA…YARI), and 437-457 (LLTS…VLLI).

It belongs to the complex I subunit 2 family. As to quaternary structure, NDH-1 is composed of 14 different subunits. Subunits NuoA, H, J, K, L, M, N constitute the membrane sector of the complex.

It is found in the cell inner membrane. It carries out the reaction a quinone + NADH + 5 H(+)(in) = a quinol + NAD(+) + 4 H(+)(out). Its function is as follows. NDH-1 shuttles electrons from NADH, via FMN and iron-sulfur (Fe-S) centers, to quinones in the respiratory chain. The immediate electron acceptor for the enzyme in this species is believed to be ubiquinone. Couples the redox reaction to proton translocation (for every two electrons transferred, four hydrogen ions are translocated across the cytoplasmic membrane), and thus conserves the redox energy in a proton gradient. The protein is NADH-quinone oxidoreductase subunit N of Neorickettsia risticii (strain Illinois).